An 871-amino-acid polypeptide reads, in one-letter code: Alanine--tRNA ligase (871 aa).

Zn(2+) is bound by residues His561, His565, Cys665, and His669.

The protein belongs to the class-II aminoacyl-tRNA synthetase family. Zn(2+) serves as cofactor.

It is found in the cytoplasm. It catalyses the reaction tRNA(Ala) + L-alanine + ATP = L-alanyl-tRNA(Ala) + AMP + diphosphate. Functionally, catalyzes the attachment of alanine to tRNA(Ala) in a two-step reaction: alanine is first activated by ATP to form Ala-AMP and then transferred to the acceptor end of tRNA(Ala). Also edits incorrectly charged Ser-tRNA(Ala) and Gly-tRNA(Ala) via its editing domain. The sequence is that of Alanine--tRNA ligase from Dehalococcoides mccartyi (strain ATCC BAA-2266 / KCTC 15142 / 195) (Dehalococcoides ethenogenes (strain 195)).